The chain runs to 147 residues: MVRLTDSEKAEVVSLWSKVDEKIIGSEALGRLLVIYPWTRRFFEHFGDLSTADAILKNPRVQAHGEKVLSSFGEGLNHLDNLRGTFAQLSELHCDELHVDPENFRLLGNILVVVLARHYGKEFTLEVQAACQKFVAGMANALAHKYH.

Positions 3 to 147 constitute a Globin domain; it reads RLTDSEKAEV…MANALAHKYH (145 aa). Heme b-binding residues include histidine 64 and histidine 93.

This sequence belongs to the globin family. Heterotetramer of two delta chains and two alpha chains. In terms of tissue distribution, red blood cells.

This Procavia capensis (Rock hyrax) protein is Hemoglobin subunit deltaH.